The sequence spans 78 residues: Conotoxin ArMKLT2-0313 (78 aa).

The first 22 residues, 1 to 22 (MKLTCVLIIAVLCLTVCQLITA), serve as a signal peptide directing secretion. The propeptide occupies 23–47 (DYLRDKQKYRSVRLRDGMLNFKGSR). The residue at position 48 (glutamine 48) is a Pyrrolidone carboxylic acid. 3 disulfides stabilise this stretch: cysteine 49-cysteine 62, cysteine 56-cysteine 67, and cysteine 61-cysteine 75.

The protein belongs to the conotoxin O1 superfamily. As to expression, expressed by the venom duct.

The protein localises to the secreted. The polypeptide is Conotoxin ArMKLT2-0313 (Conus arenatus (Sand-dusted cone)).